Consider the following 376-residue polypeptide: Palmitoyl-[acyl-carrier-protein] 4-desaturase 2, chloroplastic (376 aa).

The N-terminal 33 residues, 1 to 33 (MELHLALRASPLPAADPGRRPPPPRGNFATNCT), are a transit peptide targeting the chloroplast. The Fe cation site is built by glutamate 114, glutamate 149, histidine 152, glutamate 202, glutamate 235, and histidine 238.

It belongs to the fatty acid desaturase type 2 family. Homodimer. It depends on Fe(2+) as a cofactor. Preferentially expressed in the flower labellum.

The protein localises to the plastid. It is found in the chloroplast stroma. It catalyses the reaction hexadecanoyl-[ACP] + 2 reduced [2Fe-2S]-[ferredoxin] + O2 + 2 H(+) = (4Z)-hexadecenoyl-[ACP] + 2 oxidized [2Fe-2S]-[ferredoxin] + 2 H2O. The enzyme catalyses octadecanoyl-[ACP] + 2 reduced [2Fe-2S]-[ferredoxin] + O2 + 2 H(+) = (9Z)-octadecenoyl-[ACP] + 2 oxidized [2Fe-2S]-[ferredoxin] + 2 H2O. Its pathway is lipid metabolism; fatty acid metabolism. Its function is as follows. Converts stearoyl-ACP to oleoyl-ACP by introduction of a cis double bond between carbons 9 and 10 of the acyl chain. Converts palmitoyl-ACP to (4Z)-hexadec-4-enoyl-ACP by introduction of a cis double bond between carbons 4 and 5 of the acyl chain. Catalyzes the desaturation of saturated fatty acid 18:0 and 16:0 to generate 18:1 (delta-9) and 16:1 (delta-4) intermediates, expected to give rise to 9-alkenes and 12-alkenes, respectively. The protein is Palmitoyl-[acyl-carrier-protein] 4-desaturase 2, chloroplastic (SAD2) of Ophrys sphegodes (Early spider orchid).